Reading from the N-terminus, the 140-residue chain is CBS domain-containing protein YhcV (140 aa).

2 CBS domains span residues M8–G64 and M72–A127.

The chain is CBS domain-containing protein YhcV (yhcV) from Bacillus subtilis (strain 168).